Here is a 184-residue protein sequence, read N- to C-terminus: Non-fimbrial adhesin 1 (184 aa).

The first 28 residues, 1 to 28 (MKAKKYENQIYNENGRRCQRHGRRLAIA), serve as a signal peptide directing secretion. Cysteines 57 and 91 form a disulfide.

Forms a polymeric structure, which disintegrates with elevated temperature into a monomer but with some relatively stable dimers.

The protein is Non-fimbrial adhesin 1 (nfaA) of Escherichia coli.